The sequence spans 348 residues: MTKPYGSSLDDHLDAEVAREPSLADTAATIRALAAAAIDVSETVGRGSLAGDLAAQGEHNSDGDVQKALDVIAHKRFMQALEEAPVAQVASEEAEDVVTLKAGAPLAVAIDPLDGSSNIGVGMVVGTIFGIRPVTPGEDPNASFLTPGTTQTAAGFVVYGPATTFVVTLGNGTRIFTLDRTDNVFRLTHDAMKIVPSASEYAINASNVRHWDGPVKSYIEDCLRGSEGPRDRDFNMRWTAALVADAQRVLIRGGVFLYPGDNRKGYAQGRLRLLYETAPIAFLIEQAGGGATDGQGRILERVAAKIHERSPLVFGSTEEVECVGKYYDGRQPSAGRSPLFGQRGLMRS.

Mg(2+)-binding residues include glutamate 92, aspartate 111, leucine 113, and aspartate 114. Residues 114-117 (DGSS) and asparagine 204 each bind substrate. Glutamate 276 is a binding site for Mg(2+).

The protein belongs to the FBPase class 1 family. As to quaternary structure, homotetramer. Requires Mg(2+) as cofactor.

The protein localises to the cytoplasm. The catalysed reaction is beta-D-fructose 1,6-bisphosphate + H2O = beta-D-fructose 6-phosphate + phosphate. Its pathway is carbohydrate biosynthesis; gluconeogenesis. The chain is Fructose-1,6-bisphosphatase class 1 from Methylorubrum extorquens (strain PA1) (Methylobacterium extorquens).